Consider the following 227-residue polypeptide: Cytochrome c oxidase subunit 2 (227 aa).

The Mitochondrial intermembrane portion of the chain corresponds to 1-14 (MAYPFQLGFQDAAS). Residues 15–45 (PIMEELLHFHDHTLMIVFLISSLVLYIITLM) form a helical membrane-spanning segment. The Mitochondrial matrix portion of the chain corresponds to 46–59 (LTTKLTHTSTMDAQ). A helical membrane pass occupies residues 60 to 87 (EVETVWTILPAIILILIALPSLRILYMM). At 88–227 (DEVNNPSLTV…VFEKWSVSML (140 aa)) the chain is on the mitochondrial intermembrane side. Positions 161, 196, 198, 200, 204, and 207 each coordinate Cu cation. Glutamate 198 contributes to the Mg(2+) binding site.

The protein belongs to the cytochrome c oxidase subunit 2 family. As to quaternary structure, component of the cytochrome c oxidase (complex IV, CIV), a multisubunit enzyme composed of 14 subunits. The complex is composed of a catalytic core of 3 subunits MT-CO1, MT-CO2 and MT-CO3, encoded in the mitochondrial DNA, and 11 supernumerary subunits COX4I, COX5A, COX5B, COX6A, COX6B, COX6C, COX7A, COX7B, COX7C, COX8 and NDUFA4, which are encoded in the nuclear genome. The complex exists as a monomer or a dimer and forms supercomplexes (SCs) in the inner mitochondrial membrane with NADH-ubiquinone oxidoreductase (complex I, CI) and ubiquinol-cytochrome c oxidoreductase (cytochrome b-c1 complex, complex III, CIII), resulting in different assemblies (supercomplex SCI(1)III(2)IV(1) and megacomplex MCI(2)III(2)IV(2)). Found in a complex with TMEM177, COA6, COX18, COX20, SCO1 and SCO2. Interacts with TMEM177 in a COX20-dependent manner. Interacts with COX20. Interacts with COX16. Requires Cu cation as cofactor.

The protein localises to the mitochondrion inner membrane. It carries out the reaction 4 Fe(II)-[cytochrome c] + O2 + 8 H(+)(in) = 4 Fe(III)-[cytochrome c] + 2 H2O + 4 H(+)(out). Its function is as follows. Component of the cytochrome c oxidase, the last enzyme in the mitochondrial electron transport chain which drives oxidative phosphorylation. The respiratory chain contains 3 multisubunit complexes succinate dehydrogenase (complex II, CII), ubiquinol-cytochrome c oxidoreductase (cytochrome b-c1 complex, complex III, CIII) and cytochrome c oxidase (complex IV, CIV), that cooperate to transfer electrons derived from NADH and succinate to molecular oxygen, creating an electrochemical gradient over the inner membrane that drives transmembrane transport and the ATP synthase. Cytochrome c oxidase is the component of the respiratory chain that catalyzes the reduction of oxygen to water. Electrons originating from reduced cytochrome c in the intermembrane space (IMS) are transferred via the dinuclear copper A center (CU(A)) of subunit 2 and heme A of subunit 1 to the active site in subunit 1, a binuclear center (BNC) formed by heme A3 and copper B (CU(B)). The BNC reduces molecular oxygen to 2 water molecules using 4 electrons from cytochrome c in the IMS and 4 protons from the mitochondrial matrix. The protein is Cytochrome c oxidase subunit 2 (MT-CO2) of Balaenoptera physalus (Fin whale).